A 476-amino-acid polypeptide reads, in one-letter code: Cysteine--tRNA ligase (476 aa).

Residue C29 coordinates Zn(2+). The short motif at 31–41 (PTVYDYTHLGH) is the 'HIGH' region element. Positions 209, 234, and 238 each coordinate Zn(2+). Positions 266-270 (KMSKS) match the 'KMSKS' region motif. Residue K269 participates in ATP binding.

It belongs to the class-I aminoacyl-tRNA synthetase family. It depends on Zn(2+) as a cofactor.

It is found in the cytoplasm. It carries out the reaction tRNA(Cys) + L-cysteine + ATP = L-cysteinyl-tRNA(Cys) + AMP + diphosphate. The chain is Cysteine--tRNA ligase from Thermococcus onnurineus (strain NA1).